Reading from the N-terminus, the 974-residue chain is Toxin subunit YenC1 (974 aa).

RHS repeat units follow at residues 165–179, 290–304, 322–336, 354–368, 398–412, 490–504, 570–584, 596–610, and 630–644; these read AGQCLRHYNSAGLNQ, GVLTTYSYEAETQRL, FQDLRYTYDPVGNVL, VPENTYIYDTLYQLV, NYIRNYHYDSAGNLM, SDSETYRYDANSQRV, NDELRYSYDNLIGSS, SQEEYYPYGGTAVWM, and DATGLYYYGFRYYQP. Residues 600–680 form an RHS-repeat associated core domain region; that stretch reads YYPYGGTAVW…PIVLHDPDGL (81 aa). Residues 699 to 940 form a cytotoxic necrotising factor domain region; it reads ISSLKGTGPF…GEVSASTLLE (242 aa).

Belongs to the RHS family. As to quaternary structure, semipurified toxin complex consists of at least YenA1-YenA2-YenB-YenC1-YenC2-Chi1-Chi2. The Yen-TC:K9 subcomplex is about 26 nm tall and 22 nm in diameter with 5-fold symmetry and 5 copies of YenA1, YenA2, Chi1 and Chi2; the chitinase subunits may be solvent accessible on the exterior the complex. The Yen-TC:K9 subcomplex has no insecticidal activity. The native complex with additional YenB, YenC1 and YenC2 subunits is 16 nm taller and is insecticidal; the toxicity-conferring subunits are present at about 1 copy each.

It is found in the secreted. Toxin complex is secreted when grown at 25 degrees Celsius or less; at higher temperatures the proteins are present intracellularly but not secreted. Functionally, part of an orally active toxin complex (TC) with strong insecticidal effects on larvae of the Coleoptera Costelytra zealandica, Acrossidius tasmania and Adoryphorus couloni and some Lepidoptera larvae. The TC has an endochitinase activity. The chain is Toxin subunit YenC1 from Yersinia entomophaga.